A 1035-amino-acid chain; its full sequence is Condensin complex subunit 3 (1035 aa).

HEAT repeat units lie at residues 113-150 (RFVD…NIGE) and 153-191 (ESLF…EEQT). The residue at position 198 (S198) is a Phosphoserine. An HEAT 3 repeat occupies 201-239 (EENFEATRTLVASIQNDPSAEVRRAAMLNLINDNNTRPY). The segment at 500–536 (EEKIKSKKINRRNETSVDEEDENGTHNDEVNEDEEDD) is disordered. HEAT repeat units follow at residues 597-635 (ILIA…LDVK) and 827-864 (VQLT…SSEQ). A compositionally biased stretch (basic and acidic residues) spans 909–919 (ERSETQTKDEN). Disordered regions lie at residues 909 to 934 (ERSE…GNSF) and 959 to 995 (TTVN…LENM). 2 stretches are compositionally biased toward polar residues: residues 920-934 (NTAN…GNSF) and 959-973 (TTVN…TEQS). At S933 the chain carries Phosphoserine. The residue at position 981 (S981) is a Phosphoserine. A compositionally biased stretch (polar residues) spans 986-995 (IDTSKNLENM). S1008 is modified (phosphoserine). Residues 1012-1035 (PDEKSDAMSIDEEDKDSESFSEVC) are disordered.

The protein belongs to the CND3 (condensin subunit 3) family. As to quaternary structure, component of the condensin complex, which contains the SMC2 and SMC4 heterodimer, and three non SMC subunits that probably regulate the complex: BRN1, YCS4 and YCG1/YCS5.

The protein localises to the nucleus. Its subcellular location is the cytoplasm. It is found in the chromosome. Regulatory subunit of the condensin complex, a complex required for conversion of interphase chromatin into mitotic-like condense chromosomes. The condensin complex probably introduces positive supercoils into relaxed DNA in the presence of type I topoisomerases and converts nicked DNA into positive knotted forms in the presence of type II topoisomerases. The condensin complex probably also plays a role during interphase. This Saccharomyces cerevisiae (strain ATCC 204508 / S288c) (Baker's yeast) protein is Condensin complex subunit 3 (YCG1).